The following is a 320-amino-acid chain: tRNA U34 carboxymethyltransferase (320 aa).

Carboxy-S-adenosyl-L-methionine contacts are provided by residues Lys-89, Trp-103, Lys-108, Gly-128, 150–152, 179–180, Met-194, Tyr-198, and Arg-313; these read DPT and LE.

The protein belongs to the class I-like SAM-binding methyltransferase superfamily. CmoB family. Homotetramer.

The catalysed reaction is carboxy-S-adenosyl-L-methionine + 5-hydroxyuridine(34) in tRNA = 5-carboxymethoxyuridine(34) in tRNA + S-adenosyl-L-homocysteine + H(+). Functionally, catalyzes carboxymethyl transfer from carboxy-S-adenosyl-L-methionine (Cx-SAM) to 5-hydroxyuridine (ho5U) to form 5-carboxymethoxyuridine (cmo5U) at position 34 in tRNAs. This Haemophilus ducreyi (strain 35000HP / ATCC 700724) protein is tRNA U34 carboxymethyltransferase.